Reading from the N-terminus, the 192-residue chain is dCTP deaminase, dUMP-forming (192 aa).

Residues 101-106 (KSSLGR), aspartate 119, 127-129 (TLE), glutamine 148, tyrosine 162, and glutamine 174 contribute to the dCTP site. Glutamate 129 (proton donor/acceptor) is an active-site residue. A disordered region spans residues 162–192 (YGSGADGSRYQGQRGPTASRSHVKFHRTHVE). A compositionally biased stretch (polar residues) spans 171–181 (YQGQRGPTASR). A compositionally biased stretch (basic residues) spans 182–192 (SHVKFHRTHVE).

This sequence belongs to the dCTP deaminase family. Homotrimer.

The catalysed reaction is dCTP + 2 H2O = dUMP + NH4(+) + diphosphate. Its pathway is pyrimidine metabolism; dUMP biosynthesis; dUMP from dCTP: step 1/1. Bifunctional enzyme that catalyzes both the deamination of dCTP to dUTP and the hydrolysis of dUTP to dUMP without releasing the toxic dUTP intermediate. The polypeptide is dCTP deaminase, dUMP-forming (Beutenbergia cavernae (strain ATCC BAA-8 / DSM 12333 / CCUG 43141 / JCM 11478 / NBRC 16432 / NCIMB 13614 / HKI 0122)).